Consider the following 190-residue polypeptide: Glutamyl-tRNA(Gln) amidotransferase subunit C, mitochondrial (190 aa).

A mitochondrion-targeting transit peptide spans 1–96; the sequence is MISFQIILQQ…VLNLKQAVRF (96 aa). The tract at residues 28-57 is disordered; it reads KSNSTAVGSSDEDDEIYVPKKPIPSPIDQS.

It belongs to the GatC family. As to quaternary structure, subunit of the heterotrimeric GatCAB amidotransferase (AdT) complex, composed of A, B and C subunits.

The protein localises to the mitochondrion. It carries out the reaction L-glutamyl-tRNA(Gln) + L-glutamine + ATP + H2O = L-glutaminyl-tRNA(Gln) + L-glutamate + ADP + phosphate + H(+). Its function is as follows. Allows the formation of correctly charged Gln-tRNA(Gln) through the transamidation of misacylated Glu-tRNA(Gln) in the mitochondria. The reaction takes place in the presence of glutamine and ATP through an activated gamma-phospho-Glu-tRNA(Gln). The chain is Glutamyl-tRNA(Gln) amidotransferase subunit C, mitochondrial from Loa loa (Eye worm).